A 1051-amino-acid chain; its full sequence is MKETPKKVLVIGSGPIKIAEAAEFDYSGSQALKALKEEGIETVLVNSNVATVQTSKKFADKLYMLPVVWWAVEKVIEKERPDGIMIGFGGQTALNVGVDLHKKGVLQKYGVKVLGTQIDGIEKALSREKFRETMIENNLPVPPSLSARSEEEAIKNAKIVGYPVMVRVSFNLGGRGSMVAWTEEDLKKNIRRALSQSYIGEVLIEKYLYHWIELEYEVMRDKKGNSAVIACIENLDPMGVHTGESTVVAPCQTLDNLEYQNMRTYTIEVARSINLIGECNVQFALNPRGYEYYIIETNPRMSRSSALASKATGYPLAYVSAKLALGYELHEVINKVSGRTCACFEPSLDYIVTKIPRWDLSKFENVDQSLATEMMSVGEVMSIGRSFEESLQKAVRMLDIGEPGVVGGKIYEAKMSKVEALKYLKERRPYWFLYVAKAFKEGATIDEVYEVTGISKFFLNKIKGLVDFYETLKILKEIDEETLKLAKKLGFSDEQISKALNKSTEYVRKIRDQSNIIPVVKLIDTLAGEWPSVTNYMYLTYNGTEDDLEFSQGNKLLIVGAGGFRIGVSVEFDWSVVSLMEAASKYFDEVAVLNYNPETVSTDWDIARKLYFDEINVERVLDLIKKEKFRYVATFSGGQIGNSIAKELEENGVRLLGTSGSSVDIAENREKFSKLLDKLGISQPNWVSATSLEEIKKFVNEVGFPVLVRPSYVLSGSSMKIAYSEEELYEYVRRATEISPKYPVVISKYIENAIEAEVDGVSDGNRVLGITLEHVEEAGVHSGDATMSIPFRKLSENSVNKMRENVLSLARELNIKGPFNVQFVVKDNTPHIIELNLRASRSMPFSSKAKGINLINESMKAIFNGLDFSEDYYEPPSKYWAVKSPQFSWSQLRGTYPFLGPEMKSTGEAASFGVTFYDALLKSWLSSIPNRIPNKNGIALVYGDKNLDYLKDTAVNLVKFGLTVYSISELPLQGIETIDKTKAEELVRAKKVEIVVTDGYLKKFDYNIRRTAVDYNIPVILNGRLGYEVSKAFLDYDSLTFFEISEYGGGI.

The interval 1–399 (MKETPKKVLV…SLQKAVRMLD (399 aa)) is carboxyphosphate synthetic domain. Residues Arg127, Arg167, Gly173, Gly174, Lys206, Leu208, Glu213, Gly239, Val240, His241, Gln282, and Glu296 each coordinate ATP. One can recognise an ATP-grasp 1 domain in the interval 131–325 (RETMIENNLP…LAYVSAKLAL (195 aa)). Mg(2+) is bound by residues Gln282, Glu296, and Asn298. Mn(2+) is bound by residues Gln282, Glu296, and Asn298. An oligomerization domain region spans residues 400–548 (IGEPGVVGGK…LTYNGTEDDL (149 aa)). A carbamoyl phosphate synthetic domain region spans residues 549-930 (EFSQGNKLLI…LKSWLSSIPN (382 aa)). The 191-residue stretch at 673–863 (SKLLDKLGIS…LINESMKAIF (191 aa)) folds into the ATP-grasp 2 domain. ATP contacts are provided by Arg709, Lys748, Ile750, Glu755, Gly779, Val780, His781, Ser782, Gln822, and Glu834. Positions 822, 834, and 836 each coordinate Mg(2+). Residues Gln822, Glu834, and Asn836 each contribute to the Mn(2+) site. Residues 930-1051 (NRIPNKNGIA…FEISEYGGGI (122 aa)) enclose the MGS-like domain. The interval 931–1051 (RIPNKNGIAL…FEISEYGGGI (121 aa)) is allosteric domain.

The protein belongs to the CarB family. As to quaternary structure, composed of two chains; the small (or glutamine) chain promotes the hydrolysis of glutamine to ammonia, which is used by the large (or ammonia) chain to synthesize carbamoyl phosphate. Tetramer of heterodimers (alpha,beta)4. It depends on Mg(2+) as a cofactor. Mn(2+) serves as cofactor.

It catalyses the reaction hydrogencarbonate + L-glutamine + 2 ATP + H2O = carbamoyl phosphate + L-glutamate + 2 ADP + phosphate + 2 H(+). The enzyme catalyses hydrogencarbonate + NH4(+) + 2 ATP = carbamoyl phosphate + 2 ADP + phosphate + 2 H(+). Its pathway is amino-acid biosynthesis; L-arginine biosynthesis; carbamoyl phosphate from bicarbonate: step 1/1. It functions in the pathway pyrimidine metabolism; UMP biosynthesis via de novo pathway; (S)-dihydroorotate from bicarbonate: step 1/3. Large subunit of the glutamine-dependent carbamoyl phosphate synthetase (CPSase). CPSase catalyzes the formation of carbamoyl phosphate from the ammonia moiety of glutamine, carbonate, and phosphate donated by ATP, constituting the first step of 2 biosynthetic pathways, one leading to arginine and/or urea and the other to pyrimidine nucleotides. The large subunit (synthetase) binds the substrates ammonia (free or transferred from glutamine from the small subunit), hydrogencarbonate and ATP and carries out an ATP-coupled ligase reaction, activating hydrogencarbonate by forming carboxy phosphate which reacts with ammonia to form carbamoyl phosphate. This Saccharolobus islandicus (strain M.16.27) (Sulfolobus islandicus) protein is Carbamoyl phosphate synthase large chain.